Consider the following 407-residue polypeptide: Na(+)-translocating NADH-quinone reductase subunit F (407 aa).

A helical transmembrane segment spans residues 3 to 23 (IILGVVMFTLIVLALTVMILF). One can recognise a 2Fe-2S ferredoxin-type domain in the interval 32 to 126 (GDITVEINED…NLKIELPEEI (95 aa)). Cysteine 69, cysteine 75, cysteine 78, and cysteine 110 together coordinate [2Fe-2S] cluster. Residues 129 to 269 (VKKWTCEVIS…SGPFGEFFAK (141 aa)) form the FAD-binding FR-type domain.

This sequence belongs to the NqrF family. As to quaternary structure, composed of six subunits; NqrA, NqrB, NqrC, NqrD, NqrE and NqrF. It depends on [2Fe-2S] cluster as a cofactor. The cofactor is FAD.

The protein resides in the cell inner membrane. It catalyses the reaction a ubiquinone + n Na(+)(in) + NADH + H(+) = a ubiquinol + n Na(+)(out) + NAD(+). NQR complex catalyzes the reduction of ubiquinone-1 to ubiquinol by two successive reactions, coupled with the transport of Na(+) ions from the cytoplasm to the periplasm. The first step is catalyzed by NqrF, which accepts electrons from NADH and reduces ubiquinone-1 to ubisemiquinone by a one-electron transfer pathway. This chain is Na(+)-translocating NADH-quinone reductase subunit F, found in Yersinia pseudotuberculosis serotype I (strain IP32953).